We begin with the raw amino-acid sequence, 205 residues long: Bacterial microcompartment protein trimer-1 (205 aa).

A disordered region spans residues 1–20 (MDHAPERFDATPPAGEPDRP). 2 consecutive BMC domains span residues 21–106 (ALGV…RFLD) and 120–204 (SVII…GRLF).

The protein belongs to the bacterial microcompartments protein family. As to quaternary structure, homotrimerizes to form a pseudohexamer. Unlike its paralogs BMC-T2 and BMC-T3, the pseudohexamers do not stack. The concave side faces outward, with the N- and C-terminii exposed to the cytoplasm.

Its subcellular location is the bacterial microcompartment. Functionally, a minor component of the bacterial microcompartment (BMC) shell. Expression of 5 proteins in E.coli (BMC-H (Hoch_5815), BMC-P (Hoch_5814), and 3 BMC-T (Hoch_5812, Hoch_5816, Hoch_3341)) forms 40 nm artificial BMCs with a molecular mass of 6.5 MDa. This protein does not form stacked pseudohexamers in the BMC. There are 20 BMC-T pseudohexamers per BMC, composed of mixed BMC-T1, BMC-T2 and BMC-T3. The shell facets are 20-30 Angstroms thick, with 1 of BMC-T trimers protruding to the exterior. The chain is Bacterial microcompartment protein trimer-1 from Haliangium ochraceum (strain DSM 14365 / JCM 11303 / SMP-2).